The sequence spans 276 residues: Transmembrane protein 81 (276 aa).

The signal sequence occupies residues 1–24 (MKTSATSFIPGSLVLAFCLPVVAT). Over 25–225 (SPKTLAIPEK…QHPPWKKKVA (201 aa)) the chain is Extracellular. Asn-45 carries N-linked (GlcNAc...) asparagine glycosylation. The region spanning 83–176 (TNWLCGMLHF…NLRLVKRLYF (94 aa)) is the Ig-like domain. Cys-104 and Cys-160 are disulfide-bonded. N-linked (GlcNAc...) asparagine glycosylation is present at Asn-211. The chain crosses the membrane as a helical span at residues 226 to 246 (IAVGIGVAGGVTGGVLVSIVL). Topologically, residues 247–276 (CGRLSVIHSSASLETLQALLPKGGMLRKPD) are cytoplasmic.

Forms a complex with IZUMO1 and SPACA6 on spermatocyte cell membrane required for fertilization.

It localises to the cell membrane. Functionally, essential fertilization factor required for male fertility. Part of a conserved trimeric sperm complex with the essential fertilization factors IZUMO1 and SPACA6 which bridges sperm and oocyte membranes during fertilization by binding to IZUMO1R/JUNO on the oocyte. This chain is Transmembrane protein 81 (TMEM81), found in Bos taurus (Bovine).